The following is a 796-amino-acid chain: uncharacterized protein (796 aa).

The protein localises to the mitochondrion. This is an uncharacterized protein from Dictyostelium discoideum (Social amoeba).